We begin with the raw amino-acid sequence, 1313 residues long: Inter-alpha-trypsin inhibitor heavy chain H6 (1313 aa).

The N-terminal stretch at 1 to 23 (MSGWRYLICVSFLLTILLELTYQ) is a signal peptide. The region spanning 24–150 (GPPVPASSST…EVTFSLAYEE (127 aa)) is the VIT domain. Residues asparagine 83, asparagine 374, asparagine 540, and asparagine 594 are each glycosylated (N-linked (GlcNAc...) asparagine). The VWFA domain maps to 283–469 (NVVFVIDVSS…LQLKGLYEEI (187 aa)). 4 disordered regions span residues 612-644 (QPKQ…HGLG), 783-817 (HSKP…TLQV), 856-928 (LKPS…EPLP), and 959-983 (PSRP…SPPN). The segment covering 623–640 (QTSTSAGPDTIMPSSSSR) has biased composition (polar residues). Polar residues predominate over residues 864-875 (QISTSISLSKPE). Positions 876 to 888 (TPNPHMPQTPLPP) are enriched in pro residues. Low complexity predominate over residues 907–921 (TISSSTGPSSTTTTS). Asparagine 971 and asparagine 1231 each carry an N-linked (GlcNAc...) asparagine glycan.

This sequence belongs to the ITIH family.

Its subcellular location is the secreted. This chain is Inter-alpha-trypsin inhibitor heavy chain H6 (ITIH6), found in Homo sapiens (Human).